The following is a 53-amino-acid chain: MSQVKLQPKKKYGHIDGCVRCGRKRGIVRKYGLHLCRQCFRETARQLGFEKYS.

Cys18, Cys21, Cys36, and Cys39 together coordinate Zn(2+).

It belongs to the universal ribosomal protein uS14 family. Zinc-binding uS14 subfamily. As to quaternary structure, part of the 30S ribosomal subunit. It depends on Zn(2+) as a cofactor.

Its function is as follows. Binds 16S rRNA, required for the assembly of 30S particles. In Thermoplasma volcanium (strain ATCC 51530 / DSM 4299 / JCM 9571 / NBRC 15438 / GSS1), this protein is Small ribosomal subunit protein uS14.